Consider the following 247-residue polypeptide: Adenosylcobinamide-GDP ribazoletransferase (247 aa).

5 consecutive transmembrane segments (helical) span residues 34-54 (IITF…VFMV), 57-77 (AWCG…LMTG), 113-133 (GGLA…ELAL), 138-158 (ILAS…LLMY), and 194-214 (VLLL…AIFI).

The protein belongs to the CobS family. Requires Mg(2+) as cofactor.

It localises to the cell inner membrane. It catalyses the reaction alpha-ribazole + adenosylcob(III)inamide-GDP = adenosylcob(III)alamin + GMP + H(+). It carries out the reaction alpha-ribazole 5'-phosphate + adenosylcob(III)inamide-GDP = adenosylcob(III)alamin 5'-phosphate + GMP + H(+). It functions in the pathway cofactor biosynthesis; adenosylcobalamin biosynthesis; adenosylcobalamin from cob(II)yrinate a,c-diamide: step 7/7. Functionally, joins adenosylcobinamide-GDP and alpha-ribazole to generate adenosylcobalamin (Ado-cobalamin). Also synthesizes adenosylcobalamin 5'-phosphate from adenosylcobinamide-GDP and alpha-ribazole 5'-phosphate. This Shigella flexneri serotype 5b (strain 8401) protein is Adenosylcobinamide-GDP ribazoletransferase.